The primary structure comprises 3032 residues: Compactin nonaketide synthase, polyketide synthase component (3032 aa).

A Ketosynthase family 3 (KS3) domain is found at 8–447 (NEPIVVVGSG…GTNAHAIIEE (440 aa)). Active-site for beta-ketoacyl synthase activity residues include Cys-181, His-320, and His-367. Residues 560–901 (VFTGQGAQWP…GYIWERFGVR (342 aa)) form an acyl and malonyl transferase region. Catalysis depends on Ser-654, which acts as the For malonyltransferase activity. Residues 953–1089 (HLLLGKLSSY…GQIVITLGEA (137 aa)) form an N-terminal hotdog fold region. A PKS/mFAS DH domain is found at 953-1261 (HLLLGKLSSY…FKPFSPPTAS (309 aa)). His-985 acts as the Proton acceptor; for dehydratase activity in catalysis. The interval 985–997 (HALQGQTVFPAAG) is dehydratase-like. Residues 1106–1261 (MNNVNIDFFY…FKPFSPPTAS (156 aa)) are C-terminal hotdog fold. Residue Asp-1168 is the Proton donor; for dehydratase activity of the active site. The tract at residues 1506–1544 (YDLIIASDVLHASSNFEEKLAHIRSLLKPGGHLVTFGVT) is methyltransferase. The Carrier domain occupies 2441–2520 (DQVRQIVIDG…DLADDAATRL (80 aa)). At Ser-2480 the chain carries O-(pantetheine 4'-phosphoryl)serine. Positions 2531–2580 (IGDSTGTSDSGASPTPTDSHDEASSATSTDASSAEEDEEQEDDNEQGGRK) are disordered. Low complexity predominate over residues 2532 to 2547 (GDSTGTSDSGASPTPT). Residues 2563-2575 (SAEEDEEQEDDNE) show a composition bias toward acidic residues. Residues 2586–2946 (RLSLGQEYSW…PKTQTHAPLF (361 aa)) are peptide synthetase elongation.

It depends on pantetheine 4'-phosphate as a cofactor.

The enzyme catalyses holo-[compactin nonaketide synthase] + 9 malonyl-CoA + 11 NADPH + 20 H(+) = dihydro-ML-236C-[compactin nonaketide synthase] + 9 CO2 + 11 NADP(+) + 9 CoA + 6 H2O. It functions in the pathway polyketide biosynthesis. Its function is as follows. Nonaketide synthase; part of the gene cluster that mediates the biosynthesis of compactin, also known as mevastatin or ML-236B, and which acts as a potent competitive inhibitor of HMG-CoA reductase. Compactin biosynthesis is performed in two stages. The first stage is catalyzed by the nonaketide synthase mlcA, which belongs to type I polyketide synthases and catalyzes the iterative nine-step formation of the polyketide. This PKS stage is completed by the action of dehydrogenase mlcG, which catalyzes the NADPH-dependent reduction of the unsaturated tetra-, penta- and heptaketide intermediates that arise during the mlcA-mediated biosynthesis of the nonaketide chain and leads to dihydro-ML-236C carboxylate. Covalently bound dihydro-ML-236C carboxylate is released from mlcA by the mlcF esterase. Conversion of dihydro-ML-236C carboxylate into ML-236A carboxylate is subsequently performed with the participation of molecular oxygen and P450 monoogygenase mlcC. Finally, mlcH performs the conversion of ML-236A carboxylate to ML-236B/compactin carboxylate through the addition of the side-chain diketide moiety produced by the diketide synthase mlcB. In Penicillium citrinum, this protein is Compactin nonaketide synthase, polyketide synthase component.